A 299-amino-acid polypeptide reads, in one-letter code: SET domain-containing protein 9 (299 aa).

The 174-residue stretch at 122 to 295 folds into the SET domain; that stretch reads FSVAQATSSL…QGEELFSNYY (174 aa). Tyr-294 contacts S-adenosyl-L-methionine.

Belongs to the class V-like SAM-binding methyltransferase superfamily.

The protein is SET domain-containing protein 9 (SETD9) of Homo sapiens (Human).